The chain runs to 738 residues: 1,4-alpha-glucan branching enzyme GlgB (738 aa).

Aspartate 399 serves as the catalytic Nucleophile. Glutamate 452 serves as the catalytic Proton donor.

Belongs to the glycosyl hydrolase 13 family. GlgB subfamily. As to quaternary structure, monomer.

The enzyme catalyses Transfers a segment of a (1-&gt;4)-alpha-D-glucan chain to a primary hydroxy group in a similar glucan chain.. It participates in glycan biosynthesis; glycogen biosynthesis. Functionally, catalyzes the formation of the alpha-1,6-glucosidic linkages in glycogen by scission of a 1,4-alpha-linked oligosaccharide from growing alpha-1,4-glucan chains and the subsequent attachment of the oligosaccharide to the alpha-1,6 position. This chain is 1,4-alpha-glucan branching enzyme GlgB, found in Chlamydia trachomatis serovar D (strain ATCC VR-885 / DSM 19411 / UW-3/Cx).